Reading from the N-terminus, the 171-residue chain is Adenine phosphoribosyltransferase (171 aa).

Belongs to the purine/pyrimidine phosphoribosyltransferase family. As to quaternary structure, homodimer.

It localises to the cytoplasm. The catalysed reaction is AMP + diphosphate = 5-phospho-alpha-D-ribose 1-diphosphate + adenine. Its pathway is purine metabolism; AMP biosynthesis via salvage pathway; AMP from adenine: step 1/1. Catalyzes a salvage reaction resulting in the formation of AMP, that is energically less costly than de novo synthesis. The sequence is that of Adenine phosphoribosyltransferase from Mesomycoplasma hyopneumoniae (strain 232) (Mycoplasma hyopneumoniae).